Reading from the N-terminus, the 313-residue chain is Carbamate kinase 2 (313 aa).

This sequence belongs to the carbamate kinase family.

It localises to the cytoplasm. The enzyme catalyses hydrogencarbonate + NH4(+) + ATP = carbamoyl phosphate + ADP + H2O + H(+). The protein operates within metabolic intermediate metabolism; carbamoyl phosphate degradation; CO(2) and NH(3) from carbamoyl phosphate: step 1/1. The chain is Carbamate kinase 2 (arcC2) from Staphylococcus aureus (strain MRSA252).